An 86-amino-acid chain; its full sequence is MeuNaTxbeta-1 (86 aa).

Residues 1 to 20 (MMKIIIFLIVSSLVLIGVKT) form the signal peptide. Positions 21-83 (DNGYLLDKYT…LWHYETNKCN (63 aa)) constitute an LCN-type CS-alpha/beta domain. Intrachain disulfides connect C32–C82, C36–C57, C43–C64, and C47–C66.

In terms of tissue distribution, expressed by the venom gland.

The protein resides in the secreted. In terms of biological role, inhibits sodium channels (Nav). Also moderately inhibits human calcium-activated potassium channel KCa1.1/KCNMA1/BK (41.9% decrease at 2 uM toxin concentration). Shows moderate antimicrobial activity against both Gram-positive and -negative bacteria. In Mesobuthus eupeus (Lesser Asian scorpion), this protein is MeuNaTxbeta-1.